Here is a 59-residue protein sequence, read N- to C-terminus: MIDSAKETDRPKHRKRDEVIAFLILAVVIWPILSVAIVGGYGFLVWMSQIIFGPPGPMH.

Residues M1 to E18 are Cytoplasmic-facing. Residues V19–F43 form a helical membrane-spanning segment. Residues L44–H59 are Periplasmic-facing.

It localises to the cell inner membrane. Functionally, may be involved in mediating interactions between NapC and a quinol oxidase. This is Protein NapE (napE) from Paracoccus pantotrophus (Thiosphaera pantotropha).